A 376-amino-acid chain; its full sequence is 5-amino-6-(D-ribitylamino)uracil--L-tyrosine 4-hydroxyphenyl transferase 1 (376 aa).

The 226-residue stretch at 50–275 (VTYVVNRNIN…PGLEDLKVYA (226 aa)) folds into the Radical SAM core domain. [4Fe-4S] cluster-binding residues include C64, C68, and C71.

Belongs to the radical SAM superfamily. CofH family. Consists of two subunits, CofG and CofH. Requires [4Fe-4S] cluster as cofactor.

It catalyses the reaction 5-amino-6-(D-ribitylamino)uracil + L-tyrosine + S-adenosyl-L-methionine = 5-amino-5-(4-hydroxybenzyl)-6-(D-ribitylimino)-5,6-dihydrouracil + 2-iminoacetate + 5'-deoxyadenosine + L-methionine + H(+). Its pathway is cofactor biosynthesis; coenzyme F0 biosynthesis. Functionally, catalyzes the radical-mediated synthesis of 5-amino-5-(4-hydroxybenzyl)-6-(D-ribitylimino)-5,6-dihydrouracil from 5-amino-6-(D-ribitylamino)uracil and L-tyrosine. The polypeptide is 5-amino-6-(D-ribitylamino)uracil--L-tyrosine 4-hydroxyphenyl transferase 1 (Methanosarcina mazei (strain ATCC BAA-159 / DSM 3647 / Goe1 / Go1 / JCM 11833 / OCM 88) (Methanosarcina frisia)).